A 289-amino-acid chain; its full sequence is 3-hydroxy-16-methoxy-2,3-dihydrotabersonine N-methyltransferase (289 aa).

Positions 71–80 are SAM motif I; the sequence is MLDVGSGLGG. The tract at residues 134–142 is SAM motif II; sequence GKFDVVFTI. The tract at residues 161–170 is SAM motif III; that stretch reads VAAPGAAIII. The Microbody targeting signal motif lies at 287 to 289; it reads KSI.

This sequence belongs to the class I-like SAM-binding methyltransferase superfamily. gTMT family. As to quaternary structure, homodimer. Mainly expressed in young leaves, and, to a lower extent, in mature leaves, flowers, stems and roots (at protein level).

The protein localises to the thylakoid. It is found in the peroxisome. It catalyses the reaction (3R)-3-hydroxy-16-methoxy-2,3-dihydrotabersonine + S-adenosyl-L-methionine = deacetoxyvindoline + S-adenosyl-L-homocysteine + H(+). The protein operates within alkaloid biosynthesis; vindoline biosynthesis. Its activity is regulated as follows. Inhibited by gamma-tocopherol. In terms of biological role, S-adenosyl-L-methionine-dependent N-methyltransferase that catalyzes a nitrogen methylation involved in vindoline biosynthesis. Displays a strict requirement for a 2,3-dihydro bond in the aspidosperma skeleton. Can use 2,3-dihydrotabersonine, 2,3-dihydro-3-hydroxytabersonine and 2,3,6,7-tetraydro-3-hydroxytabersonine as substrates, but not tabersonine, vincadifformine, 21-hydroxycyclolochnericine, tryptamine, norharmane, harmaline, catharanthine, norajmaline, ajmaline, serpentine, ajmalicine, yohimbine or gamma-tocopherol. Inactive with picrinine as substrate. In Catharanthus roseus (Madagascar periwinkle), this protein is 3-hydroxy-16-methoxy-2,3-dihydrotabersonine N-methyltransferase.